A 192-amino-acid chain; its full sequence is dTTP/UTP pyrophosphatase (192 aa).

The active-site Proton acceptor is aspartate 70.

The protein belongs to the Maf family. YhdE subfamily. The cofactor is a divalent metal cation.

Its subcellular location is the cytoplasm. It carries out the reaction dTTP + H2O = dTMP + diphosphate + H(+). The enzyme catalyses UTP + H2O = UMP + diphosphate + H(+). In terms of biological role, nucleoside triphosphate pyrophosphatase that hydrolyzes dTTP and UTP. May have a dual role in cell division arrest and in preventing the incorporation of modified nucleotides into cellular nucleic acids. The protein is dTTP/UTP pyrophosphatase of Clostridium perfringens (strain SM101 / Type A).